The chain runs to 242 residues: Agamous-like MADS-box protein AGL8 (242 aa).

The region spanning 3 to 57 (RGRVQLKRIENKINRQVTFSKRRSGLLKKAHEISVLCDAEVALIVFSSKGKLFEY) is the MADS-box domain. The K-box domain maps to 88 to 178 (SENWVLEHAK…LKKIKEREKK (91 aa)). A coiled-coil region spans residues 89 to 178 (ENWVLEHAKL…LKKIKEREKK (90 aa)).

Homodimer capable of binding to CArG-box sequences. In terms of tissue distribution, vascular tissue of cauline leaves, floral shoot apex and valves of carpels and fruits.

It is found in the nucleus. In terms of biological role, probable transcription factor that promotes early floral meristem identity in synergy with APETALA1 and CAULIFLOWER. Is required subsequently for the transition of an inflorescence meristem into a floral meristem. Seems to be partially redundant to the function of APETALA1 and CAULIFLOWER in the up-regulation of LEAFY. Is also required for normal pattern of cell division, expansion and differentiation during morphogenesis of the silique. Probably not required for fruit elongation but instead is required to prevent ectopic activity of IND. Represses SAUR10 expression in stems and inflorescence branches. This chain is Agamous-like MADS-box protein AGL8 (AGL8), found in Arabidopsis thaliana (Mouse-ear cress).